A 124-amino-acid chain; its full sequence is Small ribosomal subunit protein uS12 (124 aa).

The tract at residues 1-32 is disordered; sequence MPTINQLVRKGRRDKTAKVKTAALKGSPQRRG. Asp89 is modified (3-methylthioaspartic acid). A disordered region spans residues 104–124; that stretch reads TQGVKGRKQARSRYGAKKEKS. Residues 108–118 show a composition bias toward basic residues; the sequence is KGRKQARSRYG.

The protein belongs to the universal ribosomal protein uS12 family. In terms of assembly, part of the 30S ribosomal subunit. Contacts proteins S8 and S17. May interact with IF1 in the 30S initiation complex.

With S4 and S5 plays an important role in translational accuracy. Functionally, interacts with and stabilizes bases of the 16S rRNA that are involved in tRNA selection in the A site and with the mRNA backbone. Located at the interface of the 30S and 50S subunits, it traverses the body of the 30S subunit contacting proteins on the other side and probably holding the rRNA structure together. The combined cluster of proteins S8, S12 and S17 appears to hold together the shoulder and platform of the 30S subunit. In Rhodococcus jostii (strain RHA1), this protein is Small ribosomal subunit protein uS12.